The following is a 355-amino-acid chain: Myricetin 7/4'-O-methyltransferase 2 (355 aa).

Asp221 provides a ligand contact to S-adenosyl-L-methionine. Residue His259 is the Proton acceptor of the active site.

This sequence belongs to the class I-like SAM-binding methyltransferase superfamily. Cation-independent O-methyltransferase family. In terms of assembly, homodimer. As to expression, mainly expressed in leaves secreting glandular trichomes types 1 and 4 and, to a lesser extent, in storage trichomes type 6.

It carries out the reaction quercetin + S-adenosyl-L-methionine = rhamnetin + S-adenosyl-L-homocysteine + H(+). The enzyme catalyses kaempferol + S-adenosyl-L-methionine = kaempferide + S-adenosyl-L-homocysteine + H(+). The catalysed reaction is myricetin + S-adenosyl-L-methionine = 7-O-methylmyricetin + S-adenosyl-L-homocysteine + H(+). It catalyses the reaction kaempferide + S-adenosyl-L-methionine = 7,4'-O-dimethylkaempferol + S-adenosyl-L-homocysteine + H(+). It carries out the reaction isorhamnetin + S-adenosyl-L-methionine = 3',4'-O-dimethylquercetin + S-adenosyl-L-homocysteine + 2 H(+). The enzyme catalyses 3',4',5,7-tetrahydroxy-3-methoxyflavone + S-adenosyl-L-methionine = 3',4',5-trihydroxy-3,7-dimethoxyflavone + S-adenosyl-L-homocysteine + H(+). The catalysed reaction is rhamnetin + S-adenosyl-L-methionine = 7,4'-O-dimethylquercetin + S-adenosyl-L-homocysteine + H(+). It catalyses the reaction syringetin + S-adenosyl-L-methionine = 7,3',5'-O-trimethylmyricetin + S-adenosyl-L-homocysteine + H(+). It carries out the reaction 3',4',5'-O-trimethylmyricetin + S-adenosyl-L-methionine = 7,3',4',5'-O-tetramethylmyricetin + S-adenosyl-L-homocysteine. The protein operates within flavonoid metabolism. In terms of biological role, flavonoid 7/4'-O-methyltransferase involved in the biosynthesis of polymethoxylated flavonoids natural products such as myricetin derivatives, aroma compounds possessing antioxidant properties and exhibiting pharmacological activities such as anti-carcinogen, anti-viral, anti-thrombotic, anti-diabetic, anti-atherosclerotic, and anti-inflammatory effects. Catalyzes S-adenosylmethionine-dependent regioselective 7/4'-O-methylation of flavonoids; active on various hydroxylated flavonoid substrates, including myricetin, quercetin and kaempferol. Mediates the formation of 4'-methyl derivatives from kaempferol, 3'-methyl quercetin (isorhamnetin), 7-methyl quercetin (rhamnetin) and 3'-methyl myricetin, producing 4'-methyl kaempferol (kaempferide), 3',4'-dimethyl quercetin (4'-O-methyl isorhamnetin), 7,4'-dimethyl quercetin (4'-O-methyl rhamnetin, rhamnacene) and 3',4'-dimethyl myricetin, respectively. Triggers the 7-O-methylation of quercetin, myricetin, 4'-methyl kaempferol (kaempferide), 3-methyl quercetin, 3',5'-dimethyl myricetin (syringetin) and 3',4',5'-trimethyl myricetin, thus leading to production of 7-methyl quercetin (rhamnetin), 7-methyl myricetin, 7,4'-dimethyl kaempferol (7-O-methyl kaempferide), 3,7-dimethyl quercetin, 7,3',5'-trimethyl myricetin (7-O-methyl syringetin) and 7,3',4',5'-tetramethyl myricetin, respectively. The chain is Myricetin 7/4'-O-methyltransferase 2 from Solanum habrochaites (Wild tomato).